Reading from the N-terminus, the 315-residue chain is D-erythronate dehydrogenase (315 aa).

NAD(+) contacts are provided by Ser-119, Tyr-143, and Lys-147. Catalysis depends on Tyr-143, which acts as the Proton acceptor.

This sequence belongs to the NAD(P)-dependent epimerase/dehydratase family.

It carries out the reaction D-erythronate + NAD(+) = 2-dehydro-D-erythronate + NADH + H(+). Its function is as follows. Catalyzes oxidation of D-erythronate to 2-oxo-tetronate. Can use either NAD(+) or NADP(+) as cosubstrate, with a preference for NAD(+). This chain is D-erythronate dehydrogenase, found in Haemophilus influenzae (strain ATCC 51907 / DSM 11121 / KW20 / Rd).